A 487-amino-acid polypeptide reads, in one-letter code: 2-aminomuconic semialdehyde dehydrogenase (487 aa).

231 to 236 serves as a coordination point for NAD(+); it reads GSQPTA. Glu-253 functions as the Proton acceptor in the catalytic mechanism. Cys-287 acts as the Nucleophile in catalysis. A Phosphoserine modification is found at Ser-362.

It belongs to the aldehyde dehydrogenase family. As to expression, detected in hepatocytes and in proximal and distal convoluted tubules in kidney cortex (at protein level). Highly expressed in adult liver and in kidney cortex. First detected in embryonic liver after 15 days of development.

The protein localises to the cytoplasm. It catalyses the reaction 2-aminomuconate 6-semialdehyde + NAD(+) + H2O = (2Z,4E)-2-aminomuconate + NADH + 2 H(+). The protein operates within amino-acid degradation; L-kynurenine degradation. In terms of biological role, catalyzes the NAD-dependent oxidation of 2-aminomuconic semialdehyde of the kynurenine metabolic pathway in L-tryptophan degradation. The sequence is that of 2-aminomuconic semialdehyde dehydrogenase (Aldh8a1) from Mus musculus (Mouse).